The sequence spans 230 residues: Cytidylate kinase (230 aa).

Residue 16 to 24 (GPASAGKST) coordinates ATP.

This sequence belongs to the cytidylate kinase family. Type 1 subfamily.

The protein localises to the cytoplasm. The enzyme catalyses CMP + ATP = CDP + ADP. The catalysed reaction is dCMP + ATP = dCDP + ADP. The protein is Cytidylate kinase of Lactobacillus gasseri (strain ATCC 33323 / DSM 20243 / BCRC 14619 / CIP 102991 / JCM 1131 / KCTC 3163 / NCIMB 11718 / NCTC 13722 / AM63).